Reading from the N-terminus, the 407-residue chain is MDTLLERFLRYVTFHTRSDATNPACPSSEGQLVFARALCDEMQQMGLSRVTLDEYGYLTACLPGNQPDAPAIGLIAHMDTADYEAAHVVPQIIENYQGGDICLGKGDEVLAIRDYRFLKNYLGQDLITTDGSTLLGADDKAGIAEILTAIDHLLAHPEIPRGDVWVGFTPDEEIGRGADRFPLDRFPAKWAYTVDGGELGELEYENFNAAGATVRFIGNNVHPGTAKGSMINSQTLAARFHAAMPTEQTPEATDGYQGFFHLAQMNGTVEETCLHYIIRDFDDEGFAARKAQLKERVASLQLEAPRARIELTLTDSYRNMRSQIEPHMHIVELAKAAMQAADVTPRIKPIRGGTDGARLSFMGLPCPNLFTGGHNFHGKHEFIPLQSMEKAVTTLVELVRLTSAWRG.

A Zn(2+)-binding site is contributed by His77. The active site involves Asp79. Residue Asp138 coordinates Zn(2+). Glu172 functions as the Proton acceptor in the catalytic mechanism. Positions 173, 195, and 377 each coordinate Zn(2+).

The protein belongs to the peptidase M20B family. Requires Zn(2+) as cofactor.

It localises to the cytoplasm. The enzyme catalyses Release of the N-terminal residue from a tripeptide.. Cleaves the N-terminal amino acid of tripeptides. This Aeromonas hydrophila subsp. hydrophila (strain ATCC 7966 / DSM 30187 / BCRC 13018 / CCUG 14551 / JCM 1027 / KCTC 2358 / NCIMB 9240 / NCTC 8049) protein is Peptidase T.